Here is a 1016-residue protein sequence, read N- to C-terminus: C2 domain-containing protein 5 (1016 aa).

A C2 domain is found at 1–109 (MPGKLKVKIV…EAATVISGWF (109 aa)). Asp-19, Asp-26, Asp-76, Asp-78, Ser-81, and Asp-84 together coordinate Ca(2+). Position 197 is a phosphoserine; by PKB/AKT2 (Ser-197). 2 positions are modified to phosphoserine: Ser-200 and Ser-260. The interval 265 to 330 (LKEIPFNEDP…SGSAGKEGGP (66 aa)) is disordered. The segment covering 274 to 289 (PNPNTHSSGPSTPLKN) has biased composition (polar residues). Residues 290 to 318 (QTYSFSPSKSYSRQSSSSDTDLSLTPKTG) show a composition bias toward low complexity. Residues Ser-293, Ser-295, Ser-304, Ser-305, and Ser-306 each carry the phosphoserine modification. Phosphothreonine is present on Thr-317. The segment covering 319–328 (MGSGSAGKEG) has biased composition (gly residues). Phosphoserine is present on Ser-323. Thr-601 is subject to Phosphothreonine. Residues 636 to 668 (VSEEMIGSPIPEPRQRSRLLRSQSESSDEVTEL) form a disordered region. 5 positions are modified to phosphoserine: Ser-643, Ser-657, Ser-659, Ser-661, and Ser-662. Residue Thr-666 is modified to Phosphothreonine. Ser-671, Ser-817, and Ser-869 each carry phosphoserine.

The cofactor is Ca(2+). Phosphorylated on Ser-197 by active myristoylated kinase AKT2; insulin-stimulated phosphorylation by AKT2 regulates SLC2A4/GLUT4 translocation into the plasma membrane. As to expression, expressed in liver, muscle and fat.

Its subcellular location is the cytoplasmic vesicle membrane. The protein resides in the cytoplasm. The protein localises to the cell cortex. It localises to the cell membrane. It is found in the cell projection. Its subcellular location is the ruffle. Its function is as follows. Required for insulin-stimulated glucose transport and glucose transporter SLC2A4/GLUT4 translocation from intracellular glucose storage vesicle (GSV) to the plasma membrane (PM) in adipocytes. Binds phospholipid membranes in a calcium-dependent manner and is necessary for the optimal membrane fusion between SLC2A4/GLUT4 GSV and the PM. This Mus musculus (Mouse) protein is C2 domain-containing protein 5 (C2cd5).